The sequence spans 685 residues: Threonine--tRNA ligase (685 aa).

A TGS domain is found at 1 to 65 (MSTPASAAPA…DTDVEVEPVA (65 aa)). Positions 262 to 568 (DHRKLGSELD…LTEHYAGAFP (307 aa)) are catalytic. Cysteine 367, histidine 418, and histidine 545 together coordinate Zn(2+).

This sequence belongs to the class-II aminoacyl-tRNA synthetase family. Homodimer. The cofactor is Zn(2+).

It is found in the cytoplasm. The enzyme catalyses tRNA(Thr) + L-threonine + ATP = L-threonyl-tRNA(Thr) + AMP + diphosphate + H(+). In terms of biological role, catalyzes the attachment of threonine to tRNA(Thr) in a two-step reaction: L-threonine is first activated by ATP to form Thr-AMP and then transferred to the acceptor end of tRNA(Thr). Also edits incorrectly charged L-seryl-tRNA(Thr). The chain is Threonine--tRNA ligase from Rhodococcus jostii (strain RHA1).